Reading from the N-terminus, the 413-residue chain is RRLSLHEYLSMGLLQEAGISVPHGVVARTPDEAYKIAKEIGSKDLVIKAQVLAGGRGKGTFEGGLKGGVKIVFSPEEAKAVSSRMIGKKLFTKQTGEKGRICNQVFVCERRYPRREYYFAITMERSFQGPVLIGSSQGGVNIEDVAAENPDAIIKEPIDIVEGIKKEQAVRLAQKMGFPSNLVDEAAENMIKLYNLFLKYDATMIEINPMVEDASGVVMCMDAKINFDSNSAYRQKKIFDMQDWTQEDERDRQAAKADLNYIGLDGNIGCLVNGAGLAMATMDIIKLHGGTPANFLDVGGGATVHQVTEAFKLITSDKKVLAILVNIFGGIMRCDVIAQGIVVAVKDLDLKIPVVVRLQGTRVDDAKALITASGLKILACDDLDEAAKMVVKLSEIVTLAKQAHLDVKFQLPI.

A mitochondrion-targeting transit peptide spans 1–2 (RR). The region spanning 11–238 (MGLLQEAGIS…SNSAYRQKKI (228 aa)) is the ATP-grasp domain. ATP is bound by residues lysine 48 and 55–57 (GRG). Mg(2+) contacts are provided by asparagine 208 and aspartate 222. Residues asparagine 273 and 330–332 (GIM) contribute to the substrate site.

This sequence belongs to the succinate/malate CoA ligase beta subunit family. ATP-specific subunit beta subfamily. As to quaternary structure, heterodimer of an alpha and a beta subunit. The beta subunit determines specificity for ATP. Requires Mg(2+) as cofactor. Widely expressed. Not present in liver.

The protein localises to the mitochondrion. The catalysed reaction is succinate + ATP + CoA = succinyl-CoA + ADP + phosphate. Its pathway is carbohydrate metabolism; tricarboxylic acid cycle; succinate from succinyl-CoA (ligase route): step 1/1. In terms of biological role, ATP-specific succinyl-CoA synthetase functions in the citric acid cycle (TCA), coupling the hydrolysis of succinyl-CoA to the synthesis of ATP and thus represents the only step of substrate-level phosphorylation in the TCA. The beta subunit provides nucleotide specificity of the enzyme and binds the substrate succinate, while the binding sites for coenzyme A and phosphate are found in the alpha subunit. In Columba livia (Rock dove), this protein is Succinate--CoA ligase [ADP-forming] subunit beta, mitochondrial.